Here is a 918-residue protein sequence, read N- to C-terminus: Chaperone protein ClpC1, chloroplastic (918 aa).

A Clp R domain is found at 88 to 230 (FERFTEKAIK…RTQVIRMVGE (143 aa)). Repeat stretches follow at residues 91-156 (FTEK…IGRG) and 166-230 (FTPR…MVGE). Residues 251–498 (LEEYGTNLTK…RVRLRHAQLP (248 aa)) form an i region. 296-303 (GEPGVGKT) provides a ligand contact to ATP. Residues 505–540 (DKELRQVTKDKNEAVRGQDFEKAGELRDREMELKAQ) enclose the UVR domain. Positions 565–756 (VTEADIQHIV…LLIMTSNVGS (192 aa)) are II. Position 639–646 (639–646 (GPTGVGKS)) interacts with ATP.

The protein belongs to the ClpA/ClpB family. ClpC subfamily. Widely expressed.

Its subcellular location is the plastid. It localises to the chloroplast. In terms of biological role, molecular chaperone that may interact with a ClpP-like protease involved in degradation of denatured proteins in the chloroplast. This Oryza sativa subsp. japonica (Rice) protein is Chaperone protein ClpC1, chloroplastic (CLPC1).